A 243-amino-acid chain; its full sequence is UPF0246 protein M6_Spy1787 (243 aa).

The protein belongs to the UPF0246 family.

The protein is UPF0246 protein M6_Spy1787 of Streptococcus pyogenes serotype M6 (strain ATCC BAA-946 / MGAS10394).